The chain runs to 198 residues: NADH-quinone oxidoreductase subunit B 1 (198 aa).

Positions 77, 78, 142, and 172 each coordinate [4Fe-4S] cluster.

This sequence belongs to the complex I 20 kDa subunit family. NDH-1 is composed of 14 different subunits. Subunits NuoB, C, D, E, F, and G constitute the peripheral sector of the complex. It depends on [4Fe-4S] cluster as a cofactor.

The protein localises to the cell inner membrane. It carries out the reaction a quinone + NADH + 5 H(+)(in) = a quinol + NAD(+) + 4 H(+)(out). Its function is as follows. NDH-1 shuttles electrons from NADH, via FMN and iron-sulfur (Fe-S) centers, to quinones in the respiratory chain. The immediate electron acceptor for the enzyme in this species is believed to be ubiquinone. Couples the redox reaction to proton translocation (for every two electrons transferred, four hydrogen ions are translocated across the cytoplasmic membrane), and thus conserves the redox energy in a proton gradient. This is NADH-quinone oxidoreductase subunit B 1 from Rhodopseudomonas palustris (strain ATCC BAA-98 / CGA009).